Reading from the N-terminus, the 391-residue chain is 3-ketoacyl-CoA thiolase (391 aa).

The active-site Acyl-thioester intermediate is the Cys-95. Active-site proton acceptor residues include His-347 and Cys-377.

It belongs to the thiolase-like superfamily. Thiolase family. Heterotetramer of two alpha chains (FadB) and two beta chains (FadA).

It localises to the cytoplasm. It carries out the reaction an acyl-CoA + acetyl-CoA = a 3-oxoacyl-CoA + CoA. The protein operates within lipid metabolism; fatty acid beta-oxidation. In terms of biological role, catalyzes the final step of fatty acid oxidation in which acetyl-CoA is released and the CoA ester of a fatty acid two carbons shorter is formed. This is 3-ketoacyl-CoA thiolase from Pseudomonas putida (Arthrobacter siderocapsulatus).